A 226-amino-acid polypeptide reads, in one-letter code: UPF0758 protein SPD_0975 (226 aa).

An MPN domain is found at 103 to 225; sequence SILSSQKLAK…YFSYREKTDL (123 aa). Zn(2+) is bound by residues histidine 174, histidine 176, and aspartate 187. The JAMM motif signature appears at 174-187; sequence HNHPSGAVAPSQND.

It belongs to the UPF0758 family.

This is UPF0758 protein SPD_0975 from Streptococcus pneumoniae serotype 2 (strain D39 / NCTC 7466).